The primary structure comprises 465 residues: Putative F-box/FBD/LRR-repeat protein At1g22000 (465 aa).

One can recognise an F-box domain in the interval Glu28–Lys74. LRR repeat units follow at residues Cys154–Tyr181, Val182–Ser207, Asp210–Glu230, Asn248–Glu273, and Ile339–Asn365. Residues Ser373–Leu424 form the FBD domain.

This is Putative F-box/FBD/LRR-repeat protein At1g22000 from Arabidopsis thaliana (Mouse-ear cress).